The following is a 170-amino-acid chain: Mitotic-spindle organizing protein 2B (170 aa).

Disordered stretches follow at residues 1 to 26 (MSRG…SPDA) and 102 to 170 (SADS…GSST). Residues 8-20 (GSQAMASSQAAGP) are compositionally biased toward low complexity. Polar residues predominate over residues 123 to 132 (PNPTTSTTQG). The segment covering 151–170 (SGSRMQKSSSSGKSSGGSST) has biased composition (low complexity).

It belongs to the MOZART2 family. In terms of assembly, part of the gamma-tubulin complex. Interacts with TUBG1.

It localises to the cytoplasm. The protein localises to the cytoskeleton. It is found in the microtubule organizing center. The protein resides in the centrosome. Its subcellular location is the spindle. In Xenopus tropicalis (Western clawed frog), this protein is Mitotic-spindle organizing protein 2B (mzt2b).